The chain runs to 135 residues: Regulator of ribonuclease activity B (135 aa).

Residues 114 to 135 (WGTYFESDEDDEEDESEDKPEA) are disordered. A compositionally biased stretch (acidic residues) spans 119–135 (ESDEDDEEDESEDKPEA).

The protein belongs to the RraB family. Interacts with the C-terminal region of Rne.

It localises to the cytoplasm. Its function is as follows. Globally modulates RNA abundance by binding to RNase E (Rne) and regulating its endonucleolytic activity. Can modulate Rne action in a substrate-dependent manner by altering the composition of the degradosome. This Photobacterium profundum (strain SS9) protein is Regulator of ribonuclease activity B.